The chain runs to 177 residues: Large ribosomal subunit protein uL6 (177 aa).

The protein belongs to the universal ribosomal protein uL6 family. As to quaternary structure, part of the 50S ribosomal subunit.

Functionally, this protein binds to the 23S rRNA, and is important in its secondary structure. It is located near the subunit interface in the base of the L7/L12 stalk, and near the tRNA binding site of the peptidyltransferase center. This Aliivibrio fischeri (strain MJ11) (Vibrio fischeri) protein is Large ribosomal subunit protein uL6.